A 107-amino-acid chain; its full sequence is Replication initiation control protein YabA (107 aa).

His-81, Cys-83, Cys-97, and Cys-100 together coordinate Zn(2+).

This sequence belongs to the YabA family. In terms of assembly, homotetramer. Interacts with both DnaA and DnaN, acting as a bridge between these two proteins. Requires Zn(2+) as cofactor.

The protein resides in the cytoplasm. It localises to the nucleoid. Involved in control of chromosome replication initiation. Inhibits the cooperative binding of DnaA to the oriC region, thus negatively regulating initiation of chromosome replication. Inhibits the ability of DnaA-ATP to form a helix on DNA; does not disassemble preformed DnaA-DNA helices. Decreases the residence time of DnaA on the chromosome at its binding sites (oriC, replication forks and promoter-binding sites). Tethers DnaA to the replication machinery via the DNA polymerase beta sliding clamp subunit (dnaN). Associates with oriC and other DnaA targets on the chromosome in a DnaA-dependent manner. This chain is Replication initiation control protein YabA, found in Streptococcus equi subsp. zooepidemicus (strain MGCS10565).